The sequence spans 265 residues: Insulin-like growth factor-binding protein 5 (265 aa).

The signal sequence occupies residues 1-21; that stretch reads MEMLLPMCLLLVSLCLGQCQA. The 81-residue stretch at 24–104 folds into the IGFBP N-terminal domain; sequence SFVHCEPCDD…LHGRGVCLNL (81 aa). Intrachain disulfides connect cysteine 28–cysteine 54, cysteine 31–cysteine 56, cysteine 39–cysteine 57, cysteine 46–cysteine 60, cysteine 68–cysteine 81, and cysteine 75–cysteine 101. The span at 111-121 shows a compositional bias: basic and acidic residues; sequence SKIDRESREED. A disordered region spans residues 111-137; it reads SKIDRESREEDPTTSETEDIYQSKHRG. Positions 182 to 256 constitute a Thyroglobulin type-1 domain; sequence MGPCRRQVET…IDYVNGDLQC (75 aa). Disulfide bonds link cysteine 185/cysteine 212, cysteine 223/cysteine 234, and cysteine 236/cysteine 256.

It localises to the secreted. IGF-binding proteins prolong the half-life of the IGFs and have been shown to either inhibit or stimulate the growth promoting effects of the IGFs on cell culture. They alter the interaction of IGFs with their cell surface receptors. Promotes anterior neural development by stimulating insulin growth factor (IGF) signaling via IGF receptors. The sequence is that of Insulin-like growth factor-binding protein 5 from Xenopus laevis (African clawed frog).